Consider the following 434-residue polypeptide: MISSNGLFDRAKKVIPGGVNSPVRAFRAVDLNPLFISRAKGSKLYDVEEREYIDYVCSWGPMILGHSNDLILKNVENVLHNGLSFGAPVETEVQIAEMIVSMVPGVEMVRMVNSGTEAVMSAIRLARGFTKRDKIIKFEGCYHGHSDSMLVKAGSGVLTAGIPDSLGVPQNAAGDTLTAVYNNISSVEQLFQENKNHIAAVIIEPVAANMGVIPPQEGFLKELSGICRQNSALLIFDEVITGFRLAAGGAQEYFGVEADIVTFGKIIGGGMPVGAYAGRKEIMEHVAPCGGVYQAGTLSGNPVAMAAGLAQLEILKSKPEIYEDINKKAEFLGNGFEKIVQKYKAPITLNRVGSLLCGFFSQNPVTNYQEAKLSNTNYYAAYFKSMLNKGIYLAPSQFEAMFVSSAHTYEDIDATLKAAEETLVENISLMEELI.

An N6-(pyridoxal phosphate)lysine modification is found at Lys-265.

This sequence belongs to the class-III pyridoxal-phosphate-dependent aminotransferase family. HemL subfamily. In terms of assembly, homodimer. The cofactor is pyridoxal 5'-phosphate.

It localises to the cytoplasm. The catalysed reaction is (S)-4-amino-5-oxopentanoate = 5-aminolevulinate. The protein operates within porphyrin-containing compound metabolism; protoporphyrin-IX biosynthesis; 5-aminolevulinate from L-glutamyl-tRNA(Glu): step 2/2. In Ruminiclostridium cellulolyticum (strain ATCC 35319 / DSM 5812 / JCM 6584 / H10) (Clostridium cellulolyticum), this protein is Glutamate-1-semialdehyde 2,1-aminomutase.